The chain runs to 920 residues: Sensor histidine kinase SsrA (920 aa).

The Cytoplasmic segment spans residues 1–19 (MNLLNLKNTLQTSLVIRLT). A helical membrane pass occupies residues 20-40 (FLFLLTTIIIWLLSVLTAAYI). Topologically, residues 41–291 (SMVQKRQHII…YGNLHNRILK (251 aa)) are periplasmic. The helical transmembrane segment at 292-312 (IILQQIPFTLTALVLMTSAFC) threads the bilayer. Topologically, residues 313–920 (WLLHRSLAKP…RMIFKNYTIT (608 aa)) are cytoplasmic. Residues 317 to 369 (RSLAKPLWRFVDVINKTATAPLSTRLPAQRLDELDSIAGAFNQLLDTLQVQYD) form the HAMP domain. A coiled-coil region spans residues 354-395 (AGAFNQLLDTLQVQYDNLENKVAERTQALNEAKKRAERANKR). One can recognise a Histidine kinase domain in the interval 402-614 (VISHELRTPM…CVSLVLPLQE (213 aa)). His-405 and Asp-549 together coordinate ATP. His-405 carries the post-translational modification Phosphohistidine; by autocatalysis. The Response regulatory domain maps to 690-808 (QILLVDDADI…TLARYISIAA (119 aa)). A 4-aspartylphosphate modification is found at Asp-739.

In terms of processing, autophosphorylated.

The protein resides in the cell inner membrane. It catalyses the reaction ATP + protein L-histidine = ADP + protein N-phospho-L-histidine.. Its function is as follows. Member of the two-component regulatory system SsrA/SsrB (SpiR/SsrB) that is required for intracellular proliferation and systemic dissemination within the host. When inside acidic Salmonella-containing vesicles (SCV) within host cells the SsrA sensor kinase autophosphorylates and the phosphoryl group is transferred to the response regulator SsrB; phosphorylated SsrB activates the expression of genes encoding virulence proteins, including pathogenicity island 2 (SPI2) and other horizontally acquired genes, and antagonizes the action of transcriptional repressor hns (H-NS). In Salmonella typhimurium (strain LT2 / SGSC1412 / ATCC 700720), this protein is Sensor histidine kinase SsrA.